Here is a 337-residue protein sequence, read N- to C-terminus: MEIPKDEKIKFLKELVEIYSPTGKEEEAAKFIKEKLEEYGVKAYIDKVGNVIGVKEGEGPLILLAGHVDTVPGYIPVRIEGDILWGRGSVDAKGPLSALLFAMVESNANVIFAGLVDEEGFSKGARALDVPRPEYVIVGEPSGVNGVTIGYKGSLTVRFVERVEKFHGSIGGGAAEKLIERWLSISGNFEDGFNGLSGRIVRFVAYERDFEFYGEMIVNLRTPPGYEPPRDWDIIDFVPAYEVNRRSPLVRTFVRSIRELGMKPKLKKKSGTADMNILAPRFGVDAVAYGPGDSRLDHTPYERISLMEYLQSIDVLKNVLTKLKGKDLDKIYKSSPR.

H67 is a Zn(2+) binding site. Residue D69 is part of the active site. A Zn(2+)-binding site is contributed by D91. Residue E118 is the Proton acceptor of the active site. Residues E119, E140, and H298 each coordinate Zn(2+).

This sequence belongs to the peptidase M20A family. LysK subfamily. Zn(2+) is required as a cofactor. Requires Co(2+) as cofactor.

Its subcellular location is the cytoplasm. It catalyses the reaction [amino-group carrier protein]-C-terminal-gamma-(L-lysyl)-L-glutamate + H2O = [amino-group carrier protein]-C-terminal-L-glutamate + L-lysine. The enzyme catalyses [amino-group carrier protein]-C-terminal-gamma-(L-ornithyl)-L-glutamate + H2O = [amino-group carrier protein]-C-terminal-L-glutamate + L-ornithine. It participates in amino-acid biosynthesis; L-lysine biosynthesis via AAA pathway; L-lysine from L-alpha-aminoadipate (Thermus route): step 5/5. Its pathway is amino-acid biosynthesis; L-arginine biosynthesis. Catalyzes the release of L-lysine from [LysW]-gamma-L-lysine and the release of L-ornithine from [LysW]-L-ornithine. In Pyrococcus abyssi (strain GE5 / Orsay), this protein is Putative [LysW]-lysine/[LysW]-ornithine hydrolase.